We begin with the raw amino-acid sequence, 570 residues long: MHKKDIIRLLETIAVYMELKGDNPFKVSAFRKAAAALEQDDRSLSEMDDMMSLSGIGKGTYSVIKEYIDEGKSSTLESLQKEVPEGLVPLLKLPGLGGKKIAKLYKELGVHDAESLKEACEQQKVQGLAGFGKKSEEKILQALGEAGKQPERFPIGYALRIAREIEEHLSQFTHIIKFSRAGSLRRARETVKDLDYIIATDHPAEVREQLLELPNIKSVIASGDTKVSVILSFEYETSVDFRLVTEEQFPTTLHHFTGSKDHNIKMRQIAKERGERISEYGVETVETGEIKTFPSEREFYAHFGLPLIPPEIRESGQEVETYSDSIELIELGQIKGDLHMHSTWSDGAFSIREMAEACIKKGYQYMAITDHSQYLKVANGLTAERLKQQAKEIDALNAEFENFRILKGVEMDILPDGTLDYDDDVLAEMDIVIASIHSSFNQPEHVIMKRLETALTNKHVDIIAHPTGRLIGRRAGYEIDIDQLIELARKTNTALELNANPARLDLRTEHLMKANEQGVTLVINTDAHNIEMLDDMKTGVTAARKGWTETKNVLNARSLKDVEAFLKRND.

The interval 1–315 (MHKKDIIRLL…PLIPPEIRES (315 aa)) is DNA polymerase type-X. A divalent metal cation is bound by residues Asp193, Asp195, and Asp240. The segment at 333-570 (QIKGDLHMHS…DVEAFLKRND (238 aa)) is 3'-5' exonuclease. The Mn(2+) site is built by His339, His341, His371, Glu410, His437, His465, Asp526, and His528.

This sequence in the N-terminal section; belongs to the DNA polymerase type-X family. The protein in the C-terminal section; belongs to the PHP family. In terms of assembly, monomer. Mn(2+) serves as cofactor. It depends on Mg(2+) as a cofactor.

The enzyme catalyses DNA(n) + a 2'-deoxyribonucleoside 5'-triphosphate = DNA(n+1) + diphosphate. It catalyses the reaction Exonucleolytic cleavage in the 3'- to 5'-direction to yield nucleoside 5'-phosphates.. The polymerization activity is inhibited in the presence of 2'-3'-dideoxynucleoside 5'-triphosphate (ddNTP). Its function is as follows. Strictly DNA-template-directed DNA polymerase, preferentially acting on DNA structures containing gaps from one to a few nucleotides and bearing a phosphate group at the 5' end of the downstream DNA. The fact that PolX is able to conduct filling of a single-nucleotide gap, allowing further sealing of the resulting nick by a DNA ligase, points to a putative role in base excision repair (BER) during the B.subtilis life cycle. Moreover, also possesses a 3'-5' exonuclease activity able to edit unpaired 3'-termini in a gapped DNA substrate and likely involved in resecting unannealed 3'-termini during DNA repair. The same PolX molecule could perform the subsequent gap-filling step. Does not display 5'-deoxyribose 5'-phosphate (dRP) lyase activity, as predicted by the lack of the lysine and tyrosine residues responsible for the dRP lyase activity in some other PolX members. This Bacillus subtilis (strain 168) protein is DNA polymerase/3'-5' exonuclease PolX (polX).